Here is a 665-residue protein sequence, read N- to C-terminus: UvrABC system protein B (665 aa).

The 388-residue stretch at 25-412 (ASIEGGNRYQ…ENRIVEQVIR (388 aa)) folds into the Helicase ATP-binding domain. 38 to 45 (GATGTGKT) provides a ligand contact to ATP. The Beta-hairpin motif lies at 91 to 114 (YYDYYQPEAYIPVTDTYIEKTAAI). One can recognise a Helicase C-terminal domain in the interval 429–583 (QIDDLLGEIK…VAYNKLHGIT (155 aa)). The UVR domain occupies 626-661 (PNLIDKLEAQMKEASKKLEFEEAAKLRDRIKQLRDK).

This sequence belongs to the UvrB family. Forms a heterotetramer with UvrA during the search for lesions. Interacts with UvrC in an incision complex.

It localises to the cytoplasm. The UvrABC repair system catalyzes the recognition and processing of DNA lesions. A damage recognition complex composed of 2 UvrA and 2 UvrB subunits scans DNA for abnormalities. Upon binding of the UvrA(2)B(2) complex to a putative damaged site, the DNA wraps around one UvrB monomer. DNA wrap is dependent on ATP binding by UvrB and probably causes local melting of the DNA helix, facilitating insertion of UvrB beta-hairpin between the DNA strands. Then UvrB probes one DNA strand for the presence of a lesion. If a lesion is found the UvrA subunits dissociate and the UvrB-DNA preincision complex is formed. This complex is subsequently bound by UvrC and the second UvrB is released. If no lesion is found, the DNA wraps around the other UvrB subunit that will check the other stand for damage. In Nostoc sp. (strain PCC 7120 / SAG 25.82 / UTEX 2576), this protein is UvrABC system protein B.